The primary structure comprises 1039 residues: Antigen 43 (1039 aa).

The N-terminal stretch at 1–52 (MKRHLNTCYRLVWNHMTGAFVVASELARARGKRGGVAVALSLAAVTSLPVLA) is a signal peptide. Residues 737–1039 (VNGENNSVRL…NGQATLNVTF (303 aa)) enclose the Autotransporter domain.

Interaction with TamA of the translocation and assembly module (TAM) initiates insertion in the outer membrane.

Its subcellular location is the periplasm. The protein resides in the secreted. It is found in the cell surface. The protein localises to the cell outer membrane. In terms of biological role, controls colony form variation and autoaggregation. May function as an adhesin. The polypeptide is Antigen 43 (flu) (Escherichia coli (strain K12)).